Reading from the N-terminus, the 201-residue chain is Small ribosomal subunit protein uS4 (201 aa).

The tract at residues 26 to 48 is disordered; sequence LSKKNYPPGQHGNSRKRKTSEYG. The region spanning 92–155 is the S4 RNA-binding domain; sequence GRLDNVVFRL…KSLEVIANSL (64 aa).

Belongs to the universal ribosomal protein uS4 family. As to quaternary structure, part of the 30S ribosomal subunit. Contacts protein S5. The interaction surface between S4 and S5 is involved in control of translational fidelity.

Its function is as follows. One of the primary rRNA binding proteins, it binds directly to 16S rRNA where it nucleates assembly of the body of the 30S subunit. In terms of biological role, with S5 and S12 plays an important role in translational accuracy. The chain is Small ribosomal subunit protein uS4 from Bacteroides thetaiotaomicron (strain ATCC 29148 / DSM 2079 / JCM 5827 / CCUG 10774 / NCTC 10582 / VPI-5482 / E50).